We begin with the raw amino-acid sequence, 409 residues long: MATINDNYLKLKAGYLFPEIGRRVSAFAEANPDAPIIKLGIGDVTEPLPEACRSAMVTAVEDMGNRDSFKGYGPEQGYGWLREKIAAHDFQARGCDVDAGEIFISDGSKCDCGNILDIFGDNNTIAVTDPVYPVYVDTNVMAGHTGPCNDQGEYEGLTYLPINAGNNFTAQIPSQKVDLIYLCFPNNPTGAVASKSHLQDWVNYAKSHGSIILFDAAYEAFITDPEIPHSIYEIEGARDCAIEFRSFSKNAGFTGTRCALTVVPKTLMAKAADESDVELWKLWNRRQSTKFNGVSYIVQRGAEAVYSEAGQAQTKALISFYLENAKIIREKLTAAGLQVFGGVNAPYVWVQTPNGISSWDFFDQLLHKTNVVGTPGSGFGAAGEGYFRISAFNSRANVEEAMRRITANL.

2 residues coordinate substrate: Tyr15 and Gly42. Pyridoxal 5'-phosphate-binding positions include Tyr72, 108–109 (SK), Tyr132, Asn187, Tyr218, and 246–248 (SFS). Substrate is bound by residues Lys109, Tyr132, and Asn187. Residue Lys249 is modified to N6-(pyridoxal phosphate)lysine. Pyridoxal 5'-phosphate contacts are provided by Arg257 and Asn292. Asn292 and Arg388 together coordinate substrate.

It belongs to the class-I pyridoxal-phosphate-dependent aminotransferase family. LL-diaminopimelate aminotransferase subfamily. As to quaternary structure, homodimer. Pyridoxal 5'-phosphate serves as cofactor.

It carries out the reaction (2S,6S)-2,6-diaminopimelate + 2-oxoglutarate = (S)-2,3,4,5-tetrahydrodipicolinate + L-glutamate + H2O + H(+). Its pathway is amino-acid biosynthesis; L-lysine biosynthesis via DAP pathway; LL-2,6-diaminopimelate from (S)-tetrahydrodipicolinate (aminotransferase route): step 1/1. Functionally, involved in the synthesis of meso-diaminopimelate (m-DAP or DL-DAP), required for both lysine and peptidoglycan biosynthesis. Catalyzes the direct conversion of tetrahydrodipicolinate to LL-diaminopimelate. The polypeptide is LL-diaminopimelate aminotransferase (Acaryochloris marina (strain MBIC 11017)).